Reading from the N-terminus, the 290-residue chain is MKRTPHLLAIQSHVVFGHAGNSAAVFPMQRVGVNVWPLNTVQFSNHTQYGQWAGEVLAPHRIPELVEGIAAIGELGNCDAVLSGYLGSAAQGRAILSGIERIKAVNPKALYLCDPVMGHPEKGCSVPAEVSDFLLEEAAAVADFMCPNQLELDSFSGRKPQSLFDCLAMARALLARGPKAVLVKHLDYPGKPADGFEMLLVTAEGSWHLRRPLLAFPRQPVGVGDLTSGLFLARVLLGDNLVAAFEFTAAAVHEVLLETQACASYELQLVRAQDRIAHPRVKFEATPISL.

Residues serine 12 and 47–48 contribute to the substrate site; that span reads TQ. Residues aspartate 114, glutamate 151, lysine 184, and 211–214 contribute to the ATP site; that span reads RPLL. Aspartate 225 provides a ligand contact to substrate.

This sequence belongs to the pyridoxine kinase family. PdxY subfamily. In terms of assembly, homodimer. It depends on Mg(2+) as a cofactor.

It catalyses the reaction pyridoxal + ATP = pyridoxal 5'-phosphate + ADP + H(+). It participates in cofactor metabolism; pyridoxal 5'-phosphate salvage; pyridoxal 5'-phosphate from pyridoxal: step 1/1. Pyridoxal kinase involved in the salvage pathway of pyridoxal 5'-phosphate (PLP). Catalyzes the phosphorylation of pyridoxal to PLP. The polypeptide is Pyridoxal kinase PdxY (Pseudomonas fluorescens (strain Pf0-1)).